The following is a 92-amino-acid chain: Acylphosphatase (92 aa).

In terms of domain architecture, Acylphosphatase-like spans 7–92 (KTRCTISGRV…DPAPAEFSVG (86 aa)). Active-site residues include arginine 22 and asparagine 40.

Belongs to the acylphosphatase family.

The catalysed reaction is an acyl phosphate + H2O = a carboxylate + phosphate + H(+). This Halorhodospira halophila (strain DSM 244 / SL1) (Ectothiorhodospira halophila (strain DSM 244 / SL1)) protein is Acylphosphatase (acyP).